The following is a 138-amino-acid chain: MRTLWIVAVWLMGVEGDLSQFGDMINKKTGTFGLFSYIYYGCYCGWGGKGKPQDATDRCCFVHDCCYGSVNGCDPKLSTYSYSFQNGDIVCGDDDPCLRAVCECDRVAAICFGENMNTYDKKYMLYSLFDCKEESEKC.

Residues 1 to 16 (MRTLWIVAVWLMGVEG) form the signal peptide. 7 cysteine pairs are disulfide-bonded: Cys42-Cys131, Cys44-Cys60, Cys59-Cys111, Cys65-Cys138, Cys66-Cys104, Cys73-Cys97, and Cys91-Cys102. The Ca(2+) site is built by Tyr43, Gly45, and Gly47. The active site involves His63. Residue Asp64 participates in Ca(2+) binding. The active site involves Asp105.

In terms of assembly, monomer. Ca(2+) is required as a cofactor. Expressed by the venom gland.

It localises to the secreted. The catalysed reaction is a 1,2-diacyl-sn-glycero-3-phosphocholine + H2O = a 1-acyl-sn-glycero-3-phosphocholine + a fatty acid + H(+). Its function is as follows. Snake venom phospholipase that inhibits ADP- and collagen-induced human platelet aggregation. This inhibition is completely inhibited by abolition of catalytic activity in case of collagen as inducer and partially inhibited in case of ADP as inducer. PLA2 catalyzes the calcium-dependent hydrolysis of the 2-acyl groups in 3-sn-phosphoglycerides. This chain is Acidic phospholipase A2 1, found in Macrovipera lebetinus (Levantine viper).